The chain runs to 685 residues: Augmin complex subunit dgt5 (685 aa).

Coiled-coil stretches lie at residues 87 to 165 (LQRY…NKIQ) and 342 to 379 (NMRN…DLKL).

Component of the augmin complex composed of dgt2, dgt3, dgt4, dgt5, dgt6, msd1, msd5 and wac. The complex interacts directly or indirectly with microtubules and is required for centrosome-independent generation of spindle microtubules.

It is found in the cytoplasm. It localises to the cytoskeleton. Its subcellular location is the spindle. The protein localises to the chromosome. The protein resides in the centromere. It is found in the kinetochore. It localises to the microtubule organizing center. Its subcellular location is the centrosome. As part of the augmin complex, plays a role in centrosome-independent generation of spindle microtubules. The complex is required for mitotic spindle assembly through its involvement in localizing gamma-tubulin to spindle microtubules. This is Augmin complex subunit dgt5 from Drosophila melanogaster (Fruit fly).